The primary structure comprises 222 residues: Dihydrophenazinedicarboxylate synthase (222 aa).

Position 18 (Ser18) interacts with substrate. FMN contacts are provided by residues 73–76 (RIVV) and 88–89 (ST). His90 contacts substrate. FMN-binding positions include 94–95 (QK) and Gln117. The substrate site is built by Arg139 and Ser147. FMN is bound by residues 152 to 153 (QS) and Arg205.

It belongs to the pyridoxamine 5'-phosphate oxidase family. The cofactor is FMN.

It catalyses the reaction (1R,6R)-1,4,5,5a,6,9-hexahydrophenazine-1,6-dicarboxylate + O2 = (1R,10aS)-1,4,10,10a-tetrahydrophenazine-1,6-dicarboxylate + H2O2. The catalysed reaction is (1R,10aS)-1,4,10,10a-tetrahydrophenazine-1,6-dicarboxylate + O2 = (5aS)-5,5a-dihydrophenazine-1,6-dicarboxylate + H2O2. It carries out the reaction (1R,10aS)-1,4,10,10a-tetrahydrophenazine-1-carboxylate + O2 = (10aS)-10,10a-dihydrophenazine-1-carboxylate + H2O2. The enzyme catalyses (1R)-1,4,5,10-tetrahydrophenazine-1-carboxylate + O2 = (10aS)-10,10a-dihydrophenazine-1-carboxylate + H2O2. It participates in antibiotic biosynthesis; phenazine biosynthesis. Its function is as follows. Involved in the biosynthesis of the antibiotic phenazine, a nitrogen-containing heterocyclic molecule having important roles in virulence, competition and biological control. Catalyzes several oxidations in the terminal steps of core phenazine biosynthesis. It oxidizes both hexahydrophenazine-1,6-dicarboxylic acid (HHPDC) and tetrahydrophenazine-1-carboxylic acid (THPCA) and thereby contributes to the generation of both phenazine-1,6-dicarboxylic acid (PDC) and phenazine-1-carboxylic acid (PCA). The polypeptide is Dihydrophenazinedicarboxylate synthase (Pseudomonas chlororaphis (Pseudomonas aureofaciens)).